Reading from the N-terminus, the 1413-residue chain is DNA-directed RNA polymerase subunit beta' (1413 aa).

The Zn(2+) site is built by Cys70, Cys72, Cys85, and Cys88. Asp460, Asp462, and Asp464 together coordinate Mg(2+). Zn(2+)-binding residues include Cys819, Cys893, Cys900, and Cys903. The disordered stretch occupies residues 1392–1413; it reads EEAFDFGTPSAPAEEPQHPAAE.

The protein belongs to the RNA polymerase beta' chain family. The RNAP catalytic core consists of 2 alpha, 1 beta, 1 beta' and 1 omega subunit. When a sigma factor is associated with the core the holoenzyme is formed, which can initiate transcription. It depends on Mg(2+) as a cofactor. Zn(2+) is required as a cofactor.

The catalysed reaction is RNA(n) + a ribonucleoside 5'-triphosphate = RNA(n+1) + diphosphate. Functionally, DNA-dependent RNA polymerase catalyzes the transcription of DNA into RNA using the four ribonucleoside triphosphates as substrates. The sequence is that of DNA-directed RNA polymerase subunit beta' from Burkholderia cenocepacia (strain ATCC BAA-245 / DSM 16553 / LMG 16656 / NCTC 13227 / J2315 / CF5610) (Burkholderia cepacia (strain J2315)).